The primary structure comprises 361 residues: DNA replication and repair protein RecF (361 aa).

Position 30–37 (30–37) interacts with ATP; sequence GPNGSGKT.

This sequence belongs to the RecF family.

It localises to the cytoplasm. In terms of biological role, the RecF protein is involved in DNA metabolism; it is required for DNA replication and normal SOS inducibility. RecF binds preferentially to single-stranded, linear DNA. It also seems to bind ATP. This Erwinia tasmaniensis (strain DSM 17950 / CFBP 7177 / CIP 109463 / NCPPB 4357 / Et1/99) protein is DNA replication and repair protein RecF.